Consider the following 202-residue polypeptide: Small ribosomal subunit protein uS4 (202 aa).

The disordered stretch occupies residues 22–43 (TRKSARRAYPPGQHGQNRKKRS). In terms of domain architecture, S4 RNA-binding spans 90 to 152 (MRLDNTVFRL…APSRKLVENN (63 aa)).

Belongs to the universal ribosomal protein uS4 family. As to quaternary structure, part of the 30S ribosomal subunit. Contacts protein S5. The interaction surface between S4 and S5 is involved in control of translational fidelity.

Functionally, one of the primary rRNA binding proteins, it binds directly to 16S rRNA where it nucleates assembly of the body of the 30S subunit. In terms of biological role, with S5 and S12 plays an important role in translational accuracy. This Trichormus variabilis (strain ATCC 29413 / PCC 7937) (Anabaena variabilis) protein is Small ribosomal subunit protein uS4.